The following is a 465-amino-acid chain: GTPase Der (465 aa).

EngA-type G domains are found at residues 3 to 166 (FLVA…LNEY) and 184 to 358 (IHFS…ACAN). GTP contacts are provided by residues 9-16 (GRANVGKS), 56-60 (DTGGI), 118-121 (NKVD), 190-197 (GRPNVGKS), 237-241 (DTAGV), and 302-305 (NKWD). One can recognise a KH-like domain in the interval 359 to 443 (KKITTADATR…PIVFEFKQSE (85 aa)). A disordered region spans residues 446–465 (FADRKNKRSKDEGSKSKKVK).

This sequence belongs to the TRAFAC class TrmE-Era-EngA-EngB-Septin-like GTPase superfamily. EngA (Der) GTPase family. As to quaternary structure, associates with the 50S ribosomal subunit.

In terms of biological role, GTPase that plays an essential role in the late steps of ribosome biogenesis. The chain is GTPase Der from Francisella tularensis subsp. tularensis (strain WY96-3418).